The sequence spans 312 residues: Malate dehydrogenase (312 aa).

Residues 7–13 and Asp34 contribute to the NAD(+) site; that span reads GASGGIG. Substrate contacts are provided by Arg81 and Arg87. NAD(+) contacts are provided by residues Asn94 and 117-119; that span reads ITN. Asn119 and Arg153 together coordinate substrate. Residue His177 is the Proton acceptor of the active site. Met227 lines the NAD(+) pocket.

Belongs to the LDH/MDH superfamily. MDH type 1 family. Homodimer.

It carries out the reaction (S)-malate + NAD(+) = oxaloacetate + NADH + H(+). Functionally, catalyzes the reversible oxidation of malate to oxaloacetate. This is Malate dehydrogenase from Actinobacillus succinogenes (strain ATCC 55618 / DSM 22257 / CCUG 43843 / 130Z).